Consider the following 201-residue polypeptide: 3-isopropylmalate dehydratase small subunit (201 aa).

Belongs to the LeuD family. LeuD type 1 subfamily. In terms of assembly, heterodimer of LeuC and LeuD.

It catalyses the reaction (2R,3S)-3-isopropylmalate = (2S)-2-isopropylmalate. It functions in the pathway amino-acid biosynthesis; L-leucine biosynthesis; L-leucine from 3-methyl-2-oxobutanoate: step 2/4. Catalyzes the isomerization between 2-isopropylmalate and 3-isopropylmalate, via the formation of 2-isopropylmaleate. The protein is 3-isopropylmalate dehydratase small subunit of Buchnera aphidicola subsp. Baizongia pistaciae (strain Bp).